Here is a 258-residue protein sequence, read N- to C-terminus: Indole-3-glycerol phosphate synthase (258 aa).

This sequence belongs to the TrpC family.

It catalyses the reaction 1-(2-carboxyphenylamino)-1-deoxy-D-ribulose 5-phosphate + H(+) = (1S,2R)-1-C-(indol-3-yl)glycerol 3-phosphate + CO2 + H2O. Its pathway is amino-acid biosynthesis; L-tryptophan biosynthesis; L-tryptophan from chorismate: step 4/5. This is Indole-3-glycerol phosphate synthase from Nautilia profundicola (strain ATCC BAA-1463 / DSM 18972 / AmH).